The sequence spans 292 residues: Ribosomal protein L11 methyltransferase (292 aa).

S-adenosyl-L-methionine is bound by residues Thr-136, Gly-159, Asp-181, and Asn-228.

It belongs to the methyltransferase superfamily. PrmA family.

It localises to the cytoplasm. The enzyme catalyses L-lysyl-[protein] + 3 S-adenosyl-L-methionine = N(6),N(6),N(6)-trimethyl-L-lysyl-[protein] + 3 S-adenosyl-L-homocysteine + 3 H(+). Its function is as follows. Methylates ribosomal protein L11. This chain is Ribosomal protein L11 methyltransferase, found in Rhizobium etli (strain CIAT 652).